A 194-amino-acid polypeptide reads, in one-letter code: RNA polymerase II subunit A C-terminal domain phosphatase SSU72 like protein 1 (194 aa).

This sequence belongs to the SSU72 phosphatase family.

It localises to the nucleus. It carries out the reaction O-phospho-L-seryl-[protein] + H2O = L-seryl-[protein] + phosphate. The catalysed reaction is O-phospho-L-threonyl-[protein] + H2O = L-threonyl-[protein] + phosphate. In terms of biological role, protein phosphatase that catalyzes the dephosphorylation of the C-terminal domain of RNA polymerase II. Plays a role in RNA processing and termination. This is RNA polymerase II subunit A C-terminal domain phosphatase SSU72 like protein 1 from Homo sapiens (Human).